Reading from the N-terminus, the 138-residue chain is Urease subunit beta (138 aa).

The interval 115–138 (RMRAAGFGDTGEAAPDDGDTESDQ) is disordered. Over residues 128–138 (APDDGDTESDQ) the composition is skewed to acidic residues.

The protein belongs to the urease beta subunit family. In terms of assembly, heterotrimer of UreA (gamma), UreB (beta) and UreC (alpha) subunits. Three heterotrimers associate to form the active enzyme.

The protein localises to the cytoplasm. The enzyme catalyses urea + 2 H2O + H(+) = hydrogencarbonate + 2 NH4(+). Its pathway is nitrogen metabolism; urea degradation; CO(2) and NH(3) from urea (urease route): step 1/1. The polypeptide is Urease subunit beta (Haloarcula marismortui (strain ATCC 43049 / DSM 3752 / JCM 8966 / VKM B-1809) (Halobacterium marismortui)).